Here is a 291-residue protein sequence, read N- to C-terminus: Segregation and condensation protein B (291 aa).

This sequence belongs to the ScpB family. As to quaternary structure, homodimer. Homodimerization may be required to stabilize the binding of ScpA to the Smc head domains. Component of a cohesin-like complex composed of ScpA, ScpB and the Smc homodimer, in which ScpA and ScpB bind to the head domain of Smc. The presence of the three proteins is required for the association of the complex with DNA.

The protein localises to the cytoplasm. Functionally, participates in chromosomal partition during cell division. May act via the formation of a condensin-like complex containing Smc and ScpA that pull DNA away from mid-cell into both cell halves. This chain is Segregation and condensation protein B, found in Mycoplasmoides gallisepticum (strain R(low / passage 15 / clone 2)) (Mycoplasma gallisepticum).